Consider the following 350-residue polypeptide: Peptide-N(4)-(N-acetyl-beta-glucosaminyl)asparagine amidase (350 aa).

The Zn(2+) site is built by C123, C126, C157, and C160. The active-site Nucleophile is C183. Residues H210 and D227 contribute to the active site. E230 contributes to the substrate binding site. A disordered region spans residues 324-350; the sequence is EIPPAAGAAGRQSGSADWKRQRGEDGR. The segment covering 340–350 has biased composition (basic and acidic residues); sequence DWKRQRGEDGR.

The protein belongs to the transglutaminase-like superfamily. PNGase family. Zn(2+) serves as cofactor.

It localises to the cytoplasm. The enzyme catalyses Hydrolysis of an N(4)-(acetyl-beta-D-glucosaminyl)asparagine residue in which the glucosamine residue may be further glycosylated, to yield a (substituted) N-acetyl-beta-D-glucosaminylamine and a peptide containing an aspartate residue.. Functionally, specifically deglycosylates the denatured form of N-linked glycoproteins in the cytoplasm and assists their proteasome-mediated degradation. Cleaves the beta-aspartyl-glucosamine (GlcNAc) of the glycan and the amide side chain of Asn, converting Asn to Asp. Prefers proteins containing high-mannose over those bearing complex type oligosaccharides. Can recognize misfolded proteins in the endoplasmic reticulum that are exported to the cytosol to be destroyed and deglycosylate them, while it has no activity toward native proteins. Deglycosylation is a prerequisite for subsequent proteasome-mediated degradation of some, but not all, misfolded glycoproteins. This is Peptide-N(4)-(N-acetyl-beta-glucosaminyl)asparagine amidase (PNG1) from Eremothecium gossypii (strain ATCC 10895 / CBS 109.51 / FGSC 9923 / NRRL Y-1056) (Yeast).